The primary structure comprises 231 residues: L-ribulose-5-phosphate 4-epimerase SgbE (231 aa).

Substrate contacts are provided by residues 27 to 28 (GN), 44 to 45 (SG), and 74 to 75 (SS). The Zn(2+) site is built by Asp76, His95, and His97. The active-site Proton donor/acceptor is the Asp120. His171 serves as a coordination point for Zn(2+). Residue Tyr229 is the Proton donor/acceptor of the active site.

It belongs to the aldolase class II family. AraD/FucA subfamily. It depends on Zn(2+) as a cofactor.

It catalyses the reaction L-ribulose 5-phosphate = D-xylulose 5-phosphate. In terms of biological role, catalyzes the interconversion of L-ribulose 5-phosphate (LRu5P) and D-xylulose 5-phosphate (D-Xu5P) via a retroaldol/aldol mechanism (carbon-carbon bond cleavage analogous to a class II aldolase reaction). May be involved in the utilization of 2,3-diketo-L-gulonate. This Haemophilus influenzae (strain ATCC 51907 / DSM 11121 / KW20 / Rd) protein is L-ribulose-5-phosphate 4-epimerase SgbE.